We begin with the raw amino-acid sequence, 1399 residues long: Dicer-like protein 2 (1399 aa).

A Helicase ATP-binding domain is found at 18 to 194; the sequence is MVEESMQSNI…EDLQQIERNL (177 aa). Position 31–38 (31–38) interacts with ATP; the sequence is MDTGSGKT. The DEAH box signature appears at 139 to 142; sequence DEAH. Residues 364–549 enclose the Helicase C-terminal domain; sequence KLQLLIKFLV…QSETGHRNFE (186 aa). The 95-residue stretch at 562 to 656 folds into the Dicer dsRNA-binding fold domain; it reads ASQHLHHFCS…LPARQEADDE (95 aa). 2 RNase III domains span residues 897 to 1054 and 1094 to 1270; these read LPSI…TVGG and LDVL…IDSL. Residues E1133, D1256, and E1259 each coordinate Mg(2+). The DRBM domain maps to 1301-1370; the sequence is HPKERLGHLA…AWKAVGVLES (70 aa).

This sequence belongs to the helicase family. Dicer subfamily. It depends on Mg(2+) as a cofactor. Mn(2+) is required as a cofactor.

Its function is as follows. Dicer-like endonuclease involved in cleaving double-stranded RNA in the RNA interference (RNAi) pathway. Produces 21 to 25 bp dsRNAs (siRNAs) which target the selective destruction of homologous RNAs leading to sequence-specific suppression of gene expression, called post-transcriptional gene silencing (PTGS). Part of a broad host defense response against viral infection and transposons. This is Dicer-like protein 2 (DCL2) from Phaeosphaeria nodorum (strain SN15 / ATCC MYA-4574 / FGSC 10173) (Glume blotch fungus).